The primary structure comprises 779 residues: Phosphoribosylformylglycinamidine synthase subunit PurL (779 aa).

His52 is an active-site residue. Residues Tyr55 and Lys94 each coordinate ATP. Glu96 is a Mg(2+) binding site. Substrate contacts are provided by residues 97 to 100 (SHNH) and Arg119. His98 acts as the Proton acceptor in catalysis. Position 120 (Asp120) interacts with Mg(2+). Gln243 provides a ligand contact to substrate. Asp271 serves as a coordination point for Mg(2+). Residue 315-317 (ESQ) participates in substrate binding. Positions 523 and 560 each coordinate ATP. Residue Asn561 participates in Mg(2+) binding. Substrate is bound at residue Ser563.

The protein belongs to the FGAMS family. In terms of assembly, monomer. Part of the FGAM synthase complex composed of 1 PurL, 1 PurQ and 2 PurS subunits.

It localises to the cytoplasm. The catalysed reaction is N(2)-formyl-N(1)-(5-phospho-beta-D-ribosyl)glycinamide + L-glutamine + ATP + H2O = 2-formamido-N(1)-(5-O-phospho-beta-D-ribosyl)acetamidine + L-glutamate + ADP + phosphate + H(+). It participates in purine metabolism; IMP biosynthesis via de novo pathway; 5-amino-1-(5-phospho-D-ribosyl)imidazole from N(2)-formyl-N(1)-(5-phospho-D-ribosyl)glycinamide: step 1/2. Its function is as follows. Part of the phosphoribosylformylglycinamidine synthase complex involved in the purines biosynthetic pathway. Catalyzes the ATP-dependent conversion of formylglycinamide ribonucleotide (FGAR) and glutamine to yield formylglycinamidine ribonucleotide (FGAM) and glutamate. The FGAM synthase complex is composed of three subunits. PurQ produces an ammonia molecule by converting glutamine to glutamate. PurL transfers the ammonia molecule to FGAR to form FGAM in an ATP-dependent manner. PurS interacts with PurQ and PurL and is thought to assist in the transfer of the ammonia molecule from PurQ to PurL. This chain is Phosphoribosylformylglycinamidine synthase subunit PurL, found in Prochlorococcus marinus (strain MIT 9515).